A 605-amino-acid chain; its full sequence is Aspartate--tRNA(Asp/Asn) ligase (605 aa).

E178 provides a ligand contact to L-aspartate. The tract at residues 202–205 is aspartate; sequence QLFK. Residue R224 coordinates L-aspartate. Residues 224 to 226 and Q233 contribute to the ATP site; that span reads RDE. Residue H458 participates in L-aspartate binding. E488 serves as a coordination point for ATP. R495 is a binding site for L-aspartate. 540–543 serves as a coordination point for ATP; the sequence is GLDR. A disordered region spans residues 580-605; the sequence is QQLKELHVTPAKPAKTTAKTKPRPAD.

Belongs to the class-II aminoacyl-tRNA synthetase family. Type 1 subfamily. Homodimer.

The protein resides in the cytoplasm. The catalysed reaction is tRNA(Asx) + L-aspartate + ATP = L-aspartyl-tRNA(Asx) + AMP + diphosphate. Functionally, aspartyl-tRNA synthetase with relaxed tRNA specificity since it is able to aspartylate not only its cognate tRNA(Asp) but also tRNA(Asn). Reaction proceeds in two steps: L-aspartate is first activated by ATP to form Asp-AMP and then transferred to the acceptor end of tRNA(Asp/Asn). This is Aspartate--tRNA(Asp/Asn) ligase from Thermosynechococcus vestitus (strain NIES-2133 / IAM M-273 / BP-1).